The primary structure comprises 416 residues: Adenylosuccinate synthetase (416 aa).

Residues 13-19 (GDEGKGK) and 41-43 (GHT) contribute to the GTP site. Residue D14 is the Proton acceptor of the active site. The Mg(2+) site is built by D14 and G41. Residues 14–17 (DEGK), 39–42 (NAGH), T126, R140, Q220, T235, and R299 each bind IMP. The active-site Proton donor is the H42. 295-301 (TTTGRKR) is a binding site for substrate. GTP contacts are provided by residues R301, 327-329 (KLD), and 405-407 (STS).

The protein belongs to the adenylosuccinate synthetase family. As to quaternary structure, homodimer. Mg(2+) is required as a cofactor.

Its subcellular location is the cytoplasm. It carries out the reaction IMP + L-aspartate + GTP = N(6)-(1,2-dicarboxyethyl)-AMP + GDP + phosphate + 2 H(+). It functions in the pathway purine metabolism; AMP biosynthesis via de novo pathway; AMP from IMP: step 1/2. Plays an important role in the de novo pathway of purine nucleotide biosynthesis. Catalyzes the first committed step in the biosynthesis of AMP from IMP. The polypeptide is Adenylosuccinate synthetase (Campylobacter fetus subsp. fetus (strain 82-40)).